A 941-amino-acid polypeptide reads, in one-letter code: Gamma-aminobutyric acid type B receptor subunit 2 (941 aa).

An N-terminal signal peptide occupies residues 1–41; sequence MASPRSSGQPGPPPPPPPPPARLLLLLLLPLLLPLAPGAWG. Residues 42 to 483 are Extracellular-facing; sequence WARGAPRPPP…LRKISLPLYS (442 aa). An N-linked (GlcNAc...) asparagine glycan is attached at Asn90. 3 disulfide bridges follow: Cys108/Cys135, Cys237/Cys266, and Cys265/Cys302. 4 N-linked (GlcNAc...) asparagine glycosylation sites follow: Asn298, Asn389, Asn404, and Asn453. A helical membrane pass occupies residues 484–504; the sequence is ILSALTILGMIMASAFLFFNI. Over 505-522 the chain is Cytoplasmic; the sequence is KNRNQKLIKMSSPYMNNL. Residues 523–543 form a helical membrane-spanning segment; it reads IILGGMLSYASIFLFGLDGSF. The Extracellular portion of the chain corresponds to 544–551; the sequence is VSEKTFET. A helical membrane pass occupies residues 552–572; that stretch reads LCTVRTWILTVGYTTAFGAMF. Residues 573-597 are Cytoplasmic-facing; it reads AKTWRVHAIFKNVKMKKKIIKDQKL. The chain crosses the membrane as a helical span at residues 598-618; the sequence is LVIVGGMLLIDLCILICWQAV. Residues 619 to 654 are Extracellular-facing; it reads DPLRRTVEKYSMEPDPAGRDISIRPLLEHCENTHMT. Residues 655–675 form a helical membrane-spanning segment; the sequence is IWLGIVYAYKGLLMLFGCFLA. Residues 676–691 are Cytoplasmic-facing; the sequence is WETRNVSIPALNDSKY. A helical membrane pass occupies residues 692–712; the sequence is IGMSVYNVGIMCIIGAAVSFL. The Extracellular portion of the chain corresponds to 713 to 720; that stretch reads TRDQPNVQ. The helical transmembrane segment at 721 to 741 threads the bilayer; it reads FCIVALVIIFCSTITLCLVFV. Over 742 to 941 the chain is Cytoplasmic; sequence PKLITLRTNP…PSFRVMVSGL (200 aa). A disordered region spans residues 763 to 790; that stretch reads TQNQKKEDSKTSTSVTSVNQASTSRLEG. Residues 773–787 show a composition bias toward polar residues; sequence TSTSVTSVNQASTSR. 2 positions are modified to phosphoserine: Ser776 and Ser779. A coiled-coil region spans residues 781 to 819; the sequence is NQASTSRLEGLQSENHRLRMKITELDKDLEEVTMQLQDT. Thr819 is modified (phosphothreonine). Phosphoserine occurs at positions 884, 893, 913, 916, 920, and 924.

It belongs to the G-protein coupled receptor 3 family. GABA-B receptor subfamily. In terms of assembly, heterodimer of GABBR1 and GABBR2. Homodimers may form, but are inactive. Interacts (via C-terminus) with ATF4 (via leucine zipper domain). Highly expressed in brain, especially in cerebral cortex, thalamus, hippocampus, frontal, occipital and temporal lobe, occipital pole and cerebellum, followed by corpus callosum, caudate nucleus, spinal cord, amygdala and medulla. Weakly expressed in heart, testis and skeletal muscle.

It is found in the cell membrane. The protein localises to the postsynaptic cell membrane. Functionally, component of a heterodimeric G-protein coupled receptor for GABA, formed by GABBR1 and GABBR2. Within the heterodimeric GABA receptor, only GABBR1 seems to bind agonists, while GABBR2 mediates coupling to G proteins. Ligand binding causes a conformation change that triggers signaling via guanine nucleotide-binding proteins (G proteins) and modulates the activity of down-stream effectors, such as adenylate cyclase. Signaling inhibits adenylate cyclase, stimulates phospholipase A2, activates potassium channels, inactivates voltage-dependent calcium-channels and modulates inositol phospholipid hydrolysis. Plays a critical role in the fine-tuning of inhibitory synaptic transmission. Pre-synaptic GABA receptor inhibits neurotransmitter release by down-regulating high-voltage activated calcium channels, whereas postsynaptic GABA receptor decreases neuronal excitability by activating a prominent inwardly rectifying potassium (Kir) conductance that underlies the late inhibitory postsynaptic potentials. Not only implicated in synaptic inhibition but also in hippocampal long-term potentiation, slow wave sleep, muscle relaxation and antinociception. The chain is Gamma-aminobutyric acid type B receptor subunit 2 (GABBR2) from Homo sapiens (Human).